The primary structure comprises 387 residues: Formate-dependent phosphoribosylglycinamide formyltransferase (387 aa).

N(1)-(5-phospho-beta-D-ribosyl)glycinamide-binding positions include 15–16 and glutamate 75; that span reads EL. ATP is bound by residues arginine 106, lysine 147, 152-157, 187-190, and glutamate 195; these read SSGKGQ and EEFI. The ATP-grasp domain maps to 111 to 301; that stretch reads DLASNELNIR…EFELHLRAVL (191 aa). Mg(2+) is bound by residues glutamate 260 and glutamate 272. Residues aspartate 279, lysine 349, and 356-357 each bind N(1)-(5-phospho-beta-D-ribosyl)glycinamide; that span reads RR.

The protein belongs to the PurK/PurT family. As to quaternary structure, homodimer.

It carries out the reaction N(1)-(5-phospho-beta-D-ribosyl)glycinamide + formate + ATP = N(2)-formyl-N(1)-(5-phospho-beta-D-ribosyl)glycinamide + ADP + phosphate + H(+). The protein operates within purine metabolism; IMP biosynthesis via de novo pathway; N(2)-formyl-N(1)-(5-phospho-D-ribosyl)glycinamide from N(1)-(5-phospho-D-ribosyl)glycinamide (formate route): step 1/1. Involved in the de novo purine biosynthesis. Catalyzes the transfer of formate to 5-phospho-ribosyl-glycinamide (GAR), producing 5-phospho-ribosyl-N-formylglycinamide (FGAR). Formate is provided by PurU via hydrolysis of 10-formyl-tetrahydrofolate. The sequence is that of Formate-dependent phosphoribosylglycinamide formyltransferase from Prochlorococcus marinus (strain NATL1A).